The chain runs to 332 residues: Ribonucleoside-diphosphate reductase small chain C (332 aa).

3 residues coordinate Fe cation: Asp76, Glu107, and His110. Residue Tyr114 is part of the active site. Positions 169, 203, and 206 each coordinate Fe cation.

This sequence belongs to the ribonucleoside diphosphate reductase small chain family. Homodimer and heterodimer with RNR2A. Heterotetramer of two R1 and two R2 chains. Interacts with CSN7 (via C-terminal tail). It depends on Fe cation as a cofactor. Expressed in roots, cauline and rosette leaves, stems and flowers.

It is found in the cytoplasm. The protein localises to the nucleus. The catalysed reaction is a 2'-deoxyribonucleoside 5'-diphosphate + [thioredoxin]-disulfide + H2O = a ribonucleoside 5'-diphosphate + [thioredoxin]-dithiol. Provides the precursors necessary for DNA synthesis. Catalyzes the biosynthesis of deoxyribonucleotides from the corresponding ribonucleotides. Involved in DNA damage repair and programmed cell death inhibition. This Arabidopsis thaliana (Mouse-ear cress) protein is Ribonucleoside-diphosphate reductase small chain C (TSO2).